A 293-amino-acid polypeptide reads, in one-letter code: Sphingolipid C4-hydroxylase sur2 (293 aa).

Transmembrane regions (helical) follow at residues 18 to 38, 68 to 88, and 127 to 147; these read LVSP…LHYI, AVLF…MFEG, and FIVP…WQYF. One can recognise a Fatty acid hydroxylase domain in the interval 136–270; the sequence is FAFFIIDSWQ…FTFWDHVLGT (135 aa).

Belongs to the sterol desaturase family.

The protein resides in the endoplasmic reticulum membrane. Its pathway is membrane lipid metabolism; sphingolipid biosynthesis. Its function is as follows. Required for hydroxylation of C-4 in the sphingoid moiety of ceramide. Involved in the response to syringomycin. The protein is Sphingolipid C4-hydroxylase sur2 (sur2) of Schizosaccharomyces pombe (strain 972 / ATCC 24843) (Fission yeast).